The chain runs to 508 residues: Photosystem II CP47 reaction center protein (508 aa).

Helical transmembrane passes span 21 to 36, 101 to 115, 140 to 156, 203 to 218, 237 to 252, and 457 to 472; these read SVHLMHTALVSGWAGS, IVLSGLLFLAAIWHW, GIHLFLSGVLCFGFGAF, IAAGILGILAGLFHLS, VLSSSIAAVFFAAFVV, and TFALIFFFGHIWHGAR.

It belongs to the PsbB/PsbC family. PsbB subfamily. In terms of assembly, PSII is composed of 1 copy each of membrane proteins PsbA, PsbB, PsbC, PsbD, PsbE, PsbF, PsbH, PsbI, PsbJ, PsbK, PsbL, PsbM, PsbT, PsbX, PsbY, PsbZ, Psb30/Ycf12, at least 3 peripheral proteins of the oxygen-evolving complex and a large number of cofactors. It forms dimeric complexes. Requires Binds multiple chlorophylls. PSII binds additional chlorophylls, carotenoids and specific lipids. as cofactor.

The protein localises to the plastid. It localises to the chloroplast thylakoid membrane. Its function is as follows. One of the components of the core complex of photosystem II (PSII). It binds chlorophyll and helps catalyze the primary light-induced photochemical processes of PSII. PSII is a light-driven water:plastoquinone oxidoreductase, using light energy to abstract electrons from H(2)O, generating O(2) and a proton gradient subsequently used for ATP formation. The protein is Photosystem II CP47 reaction center protein of Angiopteris evecta (Mule's foot fern).